The chain runs to 1197 residues: DExH-box ATP-dependent RNA helicase DExH3 (1197 aa).

In terms of domain architecture, Helicase ATP-binding spans 309-476 (LKAIAANQVV…FGGAPAMHIP (168 aa)). ATP is bound at residue 322 to 329 (GETGCGKT). The short motif at 423–426 (DEIH) is the DEIH box element. Positions 564-738 (LIENVLCHIV…SLCLQIKSLG (175 aa)) constitute a Helicase C-terminal domain.

Belongs to the DExH box helicase family.

It catalyses the reaction ATP + H2O = ADP + phosphate + H(+). The sequence is that of DExH-box ATP-dependent RNA helicase DExH3 from Arabidopsis thaliana (Mouse-ear cress).